The chain runs to 156 residues: Protein archease-like (156 aa).

The Ca(2+) site is built by aspartate 25, aspartate 155, and isoleucine 156.

The protein belongs to the archease family.

Component of the tRNA-splicing ligase complex required to facilitate the enzymatic turnover of catalytic subunit RtcB. Plays an important role in a RNA repair and splicing pathway which controls axon regeneration in response to peripheral (PNS) and central nervous system (CNS) injury, by activating splicing of Xbp1 to promote axon regeneration in response to axotomy. In Drosophila melanogaster (Fruit fly), this protein is Protein archease-like.